We begin with the raw amino-acid sequence, 284 residues long: L-ribulose-5-phosphate 3-epimerase UlaE (284 aa).

Belongs to the L-ribulose-5-phosphate 3-epimerase family.

It catalyses the reaction L-ribulose 5-phosphate = L-xylulose 5-phosphate. Its pathway is cofactor degradation; L-ascorbate degradation; D-xylulose 5-phosphate from L-ascorbate: step 3/4. In terms of biological role, catalyzes the isomerization of L-xylulose-5-phosphate to L-ribulose-5-phosphate. Is involved in the anaerobic L-ascorbate utilization. The polypeptide is L-ribulose-5-phosphate 3-epimerase UlaE (Escherichia coli (strain K12 / MC4100 / BW2952)).